Consider the following 322-residue polypeptide: Fructose-1,6-bisphosphatase class 1 (322 aa).

The Mg(2+) site is built by Glu84, Asp103, Leu105, and Asp106. Substrate-binding positions include 106-109 (DGSS), Asn198, and Lys264. Glu270 contacts Mg(2+).

Belongs to the FBPase class 1 family. In terms of assembly, homotetramer. Mg(2+) serves as cofactor.

It is found in the cytoplasm. It catalyses the reaction beta-D-fructose 1,6-bisphosphate + H2O = beta-D-fructose 6-phosphate + phosphate. It participates in carbohydrate biosynthesis; gluconeogenesis. This is Fructose-1,6-bisphosphatase class 1 from Saccharophagus degradans (strain 2-40 / ATCC 43961 / DSM 17024).